The sequence spans 91 residues: Small ribosomal subunit protein uS19 (91 aa).

This sequence belongs to the universal ribosomal protein uS19 family.

Its function is as follows. Protein S19 forms a complex with S13 that binds strongly to the 16S ribosomal RNA. This is Small ribosomal subunit protein uS19 from Cupriavidus taiwanensis (strain DSM 17343 / BCRC 17206 / CCUG 44338 / CIP 107171 / LMG 19424 / R1) (Ralstonia taiwanensis (strain LMG 19424)).